The primary structure comprises 511 residues: Maturase K (511 aa).

This sequence belongs to the intron maturase 2 family. MatK subfamily.

Its subcellular location is the plastid. The protein resides in the chloroplast. Usually encoded in the trnK tRNA gene intron. Probably assists in splicing its own and other chloroplast group II introns. This chain is Maturase K, found in Avena sativa (Oat).